The chain runs to 337 residues: G-protein coupled receptor 26 (337 aa).

The Extracellular portion of the chain corresponds to 1-10 (MNSWDAGLAG). A helical membrane pass occupies residues 11 to 31 (LLVGTIGVSLLSNGLVLLCLL). Residues 32 to 47 (HSADIRRQAPALFTLN) lie on the Cytoplasmic side of the membrane. A helical transmembrane segment spans residues 48–68 (LTCGNLLCTVVNMPLTLAGVV). Residues 69–81 (AQRQPAGDRLCRL) lie on the Extracellular side of the membrane. Cysteines 79 and 156 form a disulfide. Residues 82-102 (AAFLDTFLAANSMLSMAALSI) traverse the membrane as a helical segment. The Cytoplasmic portion of the chain corresponds to 103 to 123 (DRWVAVVFPLSYRAKMRLRDA). Residues 124–144 (AFMVAYTWLHALTFPATALAL) form a helical membrane-spanning segment. At 145-168 (SWLGFHQLYASCTLCSRRPDERLR) the chain is on the extracellular side. The helical transmembrane segment at 169–189 (FAVFTSAFHALSFLLSFIVLC) threads the bilayer. At 190–245 (FTYLKVLKVARFHCKRIDVITMQTLVLLVDIHPSVRERCLEEQKRRRQRATKKIST) the chain is on the cytoplasmic side. The helical transmembrane segment at 246-266 (FIGTFLVCFAPYVITRLVELF) threads the bilayer. At 267 to 276 (STAPIDSHWG) the chain is on the extracellular side. The chain crosses the membrane as a helical span at residues 277–297 (VLSKCLAYSKAASDPFVYSLL). The Cytoplasmic portion of the chain corresponds to 298–337 (RHQYRRSCKELLNRIFNRRSIHSVGLTGDSHSQNILPVSE).

The protein belongs to the G-protein coupled receptor 1 family. Detected in extracts of several brain regions including striatum, pons, cerebellum and cortex. Not detected in numerous peripheral tissue extracts, except in testis. In the brain, detected in cortical structures including the anterior cingulate area, posterior cingulate and the frontoparietal, somatosensory and piriform cortices. Prominent also in the olfactory tubercle, the islands of Calleja, ventromedial and posterior nuclei of the hypothalamus, the medial septal nucleus, nucleus of the diagonal band and the ventral tegmental area. Localized also to hippocampal structures, with signals strongest over the CA2 and CA3 regions of Ammon's horn and less so over the dentate gyrus. Expressed in the caudate putamen only in its most caudal portion, with a decreasing gradient of signal from the dorsal to ventral aspect. Strong expression associated with a single pontine structure, the inferior olivary nucleus.

The protein localises to the cell membrane. Its function is as follows. Orphan receptor. Displays a significant level of constitutive activity. Its effect is mediated by G(s)-alpha protein that stimulate adenylate cyclase, resulting in an elevation of intracellular cAMP. This is G-protein coupled receptor 26 (Gpr26) from Rattus norvegicus (Rat).